A 152-amino-acid polypeptide reads, in one-letter code: Keratin, high-sulfur matrix protein, B2C (152 aa).

A2 bears the N-acetylalanine mark. 3 repeats span residues 27–36 (STCSQTSCCQ), 37–46 (PTSIQTSCCQ), and 47–56 (PTCLQTSGCE).

In terms of biological role, the keratin products of mammalian epidermal derivatives such as wool and hair consist of microfibrils embedded in a rigid matrix of other proteins. The matrix proteins include the high-sulfur and high-tyrosine keratins, having molecular weights of 6-20 kDa, whereas the microfibrils contain the larger, low-sulfur keratins (40-56 kDa). The protein is Keratin, high-sulfur matrix protein, B2C of Ovis aries (Sheep).